Reading from the N-terminus, the 321-residue chain is Iron(3+)-hydroxamate-binding protein YxeB (321 aa).

A signal peptide spans 1–20 (MKKNILLVGMLVLLLMFVSA). A lipid anchor (N-palmitoyl cysteine) is attached at Cys-21. Cys-21 is lipidated: S-diacylglycerol cysteine. Residues 24–33 (TASKGSSSDS) show a composition bias toward low complexity. Residues 24–48 (TASKGSSSDSASEKTEMRTYKSPKG) are disordered. In terms of domain architecture, Fe/B12 periplasmic-binding spans 58–316 (RIVTDFYAGE…IITDMLIKRA (259 aa)).

It belongs to the bacterial solute-binding protein 8 family. The complex is composed of an ATP-binding protein (FhuC), two transmembrane proteins (FhuB and FhuG) and a solute-binding protein (FhuD or YxeB).

The protein resides in the cell membrane. It localises to the membrane raft. In terms of biological role, part of the ABC transporter complex FhuCBGD involved in iron(3+)-hydroxamate import. Binds the iron(3+)-hydroxamate complex and transfers it to the membrane-bound permease. Partially required for the transport of desferrioxamine. The chain is Iron(3+)-hydroxamate-binding protein YxeB (yxeB) from Bacillus subtilis (strain 168).